Reading from the N-terminus, the 332-residue chain is Glycerol-3-phosphate dehydrogenase [NAD(P)+] (332 aa).

Serine 10, tryptophan 11, lysine 31, and lysine 105 together coordinate NADPH. 3 residues coordinate sn-glycerol 3-phosphate: lysine 105, glycine 136, and serine 138. Alanine 140 contributes to the NADPH binding site. Residues lysine 191, aspartate 244, serine 254, arginine 255, and asparagine 256 each contribute to the sn-glycerol 3-phosphate site. The Proton acceptor role is filled by lysine 191. Position 255 (arginine 255) interacts with NADPH. The NADPH site is built by valine 279 and glutamate 281.

The protein belongs to the NAD-dependent glycerol-3-phosphate dehydrogenase family.

The protein resides in the cytoplasm. It catalyses the reaction sn-glycerol 3-phosphate + NAD(+) = dihydroxyacetone phosphate + NADH + H(+). The enzyme catalyses sn-glycerol 3-phosphate + NADP(+) = dihydroxyacetone phosphate + NADPH + H(+). The protein operates within membrane lipid metabolism; glycerophospholipid metabolism. In terms of biological role, catalyzes the reduction of the glycolytic intermediate dihydroxyacetone phosphate (DHAP) to sn-glycerol 3-phosphate (G3P), the key precursor for phospholipid synthesis. The sequence is that of Glycerol-3-phosphate dehydrogenase [NAD(P)+] from Anaeromyxobacter dehalogenans (strain 2CP-C).